Consider the following 162-residue polypeptide: RNA pyrophosphohydrolase (162 aa).

The Nudix hydrolase domain maps to lysine 7–glutamate 149. Residues glycine 40 to glycine 61 carry the Nudix box motif.

It belongs to the Nudix hydrolase family. RppH subfamily. A divalent metal cation serves as cofactor.

Accelerates the degradation of transcripts by removing pyrophosphate from the 5'-end of triphosphorylated RNA, leading to a more labile monophosphorylated state that can stimulate subsequent ribonuclease cleavage. This Wolbachia sp. subsp. Drosophila simulans (strain wRi) protein is RNA pyrophosphohydrolase.